The following is a 686-amino-acid chain: Eukaryotic translation initiation factor 3 subunit B (686 aa).

The disordered stretch occupies residues 1–29; that stretch reads MAKKHAGADANDSDYNEEPNFEDPPGFVD. Residues 11-21 show a composition bias toward acidic residues; the sequence is NDSDYNEEPNF. Residues 53–137 enclose the RRM domain; it reads SVVVVDNIPK…HTFAVNLFTD (85 aa). 5 WD repeats span residues 203-242, 289-327, 330-365, 438-480, and 526-571; these read TRERFTDTFVKWSPLGTYVVTFHKPGVAIWGGSNFQKIQK, DGMSVLSMFRWSHDDKFVARMGENSIHIYETPSFYLLDL, IKIPGIRGFSWSPTDNVIAYWVEEQNQIPARVTLME, EIRE…KPSL, and PDHF…IKRT. Positions 590–642 form a coiled coil; the sequence is AEEKQKEIKKNLKKYYAVFEQKDRLRLTRASKELLEKRAQLRETFMEYRNKRI.

It belongs to the eIF-3 subunit B family. Component of the eukaryotic translation initiation factor 3 (eIF-3) complex. The eIF-3 complex interacts with pix. Interacts with mxt.

The protein resides in the cytoplasm. RNA-binding component of the eukaryotic translation initiation factor 3 (eIF-3) complex, which is involved in protein synthesis of a specialized repertoire of mRNAs and, together with other initiation factors, stimulates binding of mRNA and methionyl-tRNAi to the 40S ribosome. The eIF-3 complex specifically targets and initiates translation of a subset of mRNAs involved in cell proliferation. The polypeptide is Eukaryotic translation initiation factor 3 subunit B (Drosophila ananassae (Fruit fly)).